The primary structure comprises 941 residues: Bifunctional glutamine synthetase adenylyltransferase/adenylyl-removing enzyme (941 aa).

The segment at 1-437 (MSIPTASLSP…TAEFAELLAP (437 aa)) is adenylyl removase. Positions 444–941 (PDTLADYWRA…FPLGKDEAAL (498 aa)) are adenylyl transferase.

Belongs to the GlnE family. Mg(2+) serves as cofactor.

It carries out the reaction [glutamine synthetase]-O(4)-(5'-adenylyl)-L-tyrosine + phosphate = [glutamine synthetase]-L-tyrosine + ADP. It catalyses the reaction [glutamine synthetase]-L-tyrosine + ATP = [glutamine synthetase]-O(4)-(5'-adenylyl)-L-tyrosine + diphosphate. Its function is as follows. Involved in the regulation of glutamine synthetase GlnA, a key enzyme in the process to assimilate ammonia. When cellular nitrogen levels are high, the C-terminal adenylyl transferase (AT) inactivates GlnA by covalent transfer of an adenylyl group from ATP to specific tyrosine residue of GlnA, thus reducing its activity. Conversely, when nitrogen levels are low, the N-terminal adenylyl removase (AR) activates GlnA by removing the adenylyl group by phosphorolysis, increasing its activity. The regulatory region of GlnE binds the signal transduction protein PII (GlnB) which indicates the nitrogen status of the cell. The chain is Bifunctional glutamine synthetase adenylyltransferase/adenylyl-removing enzyme from Xanthomonas oryzae pv. oryzae (strain MAFF 311018).